An 870-amino-acid polypeptide reads, in one-letter code: MKFTLSWLKQFLDTSASVTEIAESLTAIGLEVEEIIDKAADLQKFEVAYIVSTKPHPSADKLKICEVETKNGNLQIVCGASNARAGIKVVLANIGVEIPNGKFKIKESNIRGEKSCGMLCSEEELFLASESEGIIELPEDAVVGEPFTKYYGLDDPVFVINVTPNRGDALSVYGIARDLSAKGIGTLKELEIPAVKSTFSSKVKLNIKDKEACPLFTFREIRNLKNKPSPDWLQKLLKNIGVKPISSIVDVTNYMSYSFGQPMHAYDADKIGGGIVVDRHCEENVIPRLDCGISGEESVIQDPVVKPRDDNRGFHALNDKKYLLNKSDLVIKDENGVQALAGIIGGISSSCDSNTMNILLEAACFNAKMVAASGRRLQIDTDSRYRFERNIDRNFTEKALNIATDLILSICDGGEVSEILISGEKEPAKKTLDFPAGYLEKITGIKLTILLHNEANKGEFVGNTEHSIAAYKEVREDASTGLTPKLPLEASYVKGLNIKGIEAILNKLGFATDTEKDVIKITPPSWRHDINILEDVVEEITRIYGYDKIESIKLPELEQDNNRLREHKRISSFKRILASKGYDEVVTNSFMNSKDAKLFTELKDELFLLNPISVEDNYMRPTIVPNLLDIVRKNLARSIKDMAFFEVGPNFIGLNTEATYLTAILTGSYNSKNPHSIGRSYDIFDLKSDLETVFDYAGLSIEKCIVSNQATPLYYHPTRSVNLALGKNLLGHFGQIHPKILKHYDIKEEVFAFELNITNLPAPKAKFGKRDEFIISDYQANFRDYAFIIARDQPVGEIISYINNFNKKLVKSVILFDIYSGDKLPSGKKSIAIRVGLQADDRTLNEDDLNSFSKDLIANIEQKFQGTLRE.

The 110-residue stretch at 39-148 folds into the tRNA-binding domain; that stretch reads AADLQKFEVA…EDAVVGEPFT (110 aa). The B5 domain occupies 427 to 551; sequence PAKKTLDFPA…RIYGYDKIES (125 aa). Positions 450-498 constitute an RPE1 insert domain; it reads LLHNEANKGEFVGNTEHSIAAYKEVREDASTGLTPKLPLEASYVKGLNI. The Mg(2+) site is built by D529, D535, E538, and E539. The region spanning 776–869 is the FDX-ACB domain; it reads SDYQANFRDY…IEQKFQGTLR (94 aa).

It belongs to the phenylalanyl-tRNA synthetase beta subunit family. Type 1 subfamily. Tetramer of two alpha and two beta subunits. Requires Mg(2+) as cofactor.

The protein resides in the cytoplasm. The enzyme catalyses tRNA(Phe) + L-phenylalanine + ATP = L-phenylalanyl-tRNA(Phe) + AMP + diphosphate + H(+). The chain is Phenylalanine--tRNA ligase beta subunit (pheT) from Rickettsia bellii (strain RML369-C).